The chain runs to 417 residues: NADH-quinone oxidoreductase subunit D (417 aa).

The protein belongs to the complex I 49 kDa subunit family. As to quaternary structure, NDH-1 is composed of 14 different subunits. Subunits NuoB, C, D, E, F, and G constitute the peripheral sector of the complex.

The protein localises to the cell inner membrane. The enzyme catalyses a quinone + NADH + 5 H(+)(in) = a quinol + NAD(+) + 4 H(+)(out). Its function is as follows. NDH-1 shuttles electrons from NADH, via FMN and iron-sulfur (Fe-S) centers, to quinones in the respiratory chain. The immediate electron acceptor for the enzyme in this species is believed to be ubiquinone. Couples the redox reaction to proton translocation (for every two electrons transferred, four hydrogen ions are translocated across the cytoplasmic membrane), and thus conserves the redox energy in a proton gradient. The protein is NADH-quinone oxidoreductase subunit D of Azoarcus sp. (strain BH72).